The chain runs to 64 residues: Large ribosomal subunit protein bL35 (64 aa).

It belongs to the bacterial ribosomal protein bL35 family.

The chain is Large ribosomal subunit protein bL35 from Vibrio vulnificus (strain CMCP6).